The following is a 95-amino-acid chain: Osteocalcin-2 (95 aa).

The first 23 residues, 1–23, serve as a signal peptide directing secretion; the sequence is MRTLSLLTLLALAALCLSDLTDA. The propeptide occupies 24 to 49; the sequence is KPSGPESDKAFMSKQEGNKVVNRLRR. One can recognise a Gla domain in the interval 46 to 92; sequence RLRRYLGASVPSPDPLEPTREQCELNPACDELSDQYGLKTAYKRIYG. Ca(2+)-binding residues include Glu-62, Glu-66, Glu-69, and Asp-75. A disulfide bridge links Cys-68 with Cys-74.

It belongs to the osteocalcin/matrix Gla protein family. Gamma-carboxyglutamate residues are formed by vitamin K dependent carboxylation by GGCX. These residues are essential for the binding of calcium. Carboxylated in a Ptprv/Esp-dependent process. Decarboxylation promotes the hormone activity. As to expression, bone.

It is found in the secreted. Functionally, the carboxylated form is one of the main organic components of the bone matrix, which constitutes 1-2% of the total bone protein: it acts as a negative regulator of bone formation and is required to limit bone formation without impairing bone resorption or mineralization. The carboxylated form binds strongly to apatite and calcium. The uncarboxylated form acts as a hormone secreted by osteoblasts, which regulates different cellular processes, such as energy metabolism, male fertility and brain development. Regulates of energy metabolism by acting as a hormone favoring pancreatic beta-cell proliferation, insulin secretion and sensitivity and energy expenditure. Uncarboxylated osteocalcin hormone also promotes testosterone production in the testes: acts as a ligand for G protein-coupled receptor GPRC6A at the surface of Leydig cells, initiating a signaling response that promotes the expression of enzymes required for testosterone synthesis in a CREB-dependent manner. Also acts as a regulator of brain development: osteocalcin hormone crosses the blood-brain barrier and acts as a ligand for GPR158 on neurons, initiating a signaling response that prevents neuronal apoptosis in the hippocampus, favors the synthesis of all monoamine neurotransmitters and inhibits that of gamma-aminobutyric acid (GABA). Osteocalcin also crosses the placenta during pregnancy and maternal osteocalcin is required for fetal brain development. This Mus musculus (Mouse) protein is Osteocalcin-2 (Bglap2).